Here is a 702-residue protein sequence, read N- to C-terminus: Ribosomal RNA large subunit methyltransferase K/L (702 aa).

The region spanning 43–154 is the THUMP domain; that stretch reads LVYQSLMWSR…KETASIALDL (112 aa).

The protein belongs to the methyltransferase superfamily. RlmKL family.

Its subcellular location is the cytoplasm. It catalyses the reaction guanosine(2445) in 23S rRNA + S-adenosyl-L-methionine = N(2)-methylguanosine(2445) in 23S rRNA + S-adenosyl-L-homocysteine + H(+). The enzyme catalyses guanosine(2069) in 23S rRNA + S-adenosyl-L-methionine = N(2)-methylguanosine(2069) in 23S rRNA + S-adenosyl-L-homocysteine + H(+). Its function is as follows. Specifically methylates the guanine in position 2445 (m2G2445) and the guanine in position 2069 (m7G2069) of 23S rRNA. The chain is Ribosomal RNA large subunit methyltransferase K/L from Shigella boydii serotype 4 (strain Sb227).